Consider the following 479-residue polypeptide: MRLTNRRFSTFLGNALPSKKKGFIFMSQLLYLRTFSTHTSYLRSSWQAILNYKYIYQNAEAVQRNCINRNLQAIAETVPKIRSLIDEKESLKNEFFPLLSLKKEITLQIERCSDPNERGKLVNEAKGLKKKTEEYNKIISKVTNDLYQYCLAVPNTTLPTVPVGPEDKAVVVQKIGSPLVKKTGSLKDHLQIANEGINLEDAAQASGHSFCYTTGDIALLEMAITNYAMDFAISKGWCPVIPPTIVRTDIALACGFQPRDEEGQQIYELDSYTSPLVSSPKQCLIGTAEISLAALGFKKTFNNFTERKVVGVSRAYRREAGARGKENRGLYRLHEFTKVELFAWTHPSRSSEMFNEIVNFQKEFVETLKIPARILNMPTAELGSSASQKYDIEAWMPARQSYGEITSASNCLEYQARRLLTRYRNDKDSGFVHTLNGTAAAIPRLIIAILENHQQEDGTVKVPETLVPYIHKEYLFKAK.

Residues 1-42 constitute a mitochondrion transit peptide; that stretch reads MRLTNRRFSTFLGNALPSKKKGFIFMSQLLYLRTFSTHTSYL. 287–289 contacts L-serine; it reads TAE. 317–319 is a binding site for ATP; sequence RRE. E340 is an L-serine binding site. 404-407 serves as a coordination point for ATP; sequence EITS. Position 438 (T438) interacts with L-serine.

Belongs to the class-II aminoacyl-tRNA synthetase family. Type-1 seryl-tRNA synthetase subfamily. Homodimer. The tRNA molecule probably binds across the dimer.

The protein localises to the mitochondrion matrix. It catalyses the reaction tRNA(Ser) + L-serine + ATP = L-seryl-tRNA(Ser) + AMP + diphosphate + H(+). Its function is as follows. Catalyzes the attachment of serine to tRNA(Ser). Is also probably able to aminoacylate tRNA(Sec) with serine, to form the misacylated tRNA L-seryl-tRNA(Sec), which will be further converted into selenocysteinyl-tRNA(Sec). The sequence is that of Serine--tRNA ligase, mitochondrial (dia4) from Schizosaccharomyces pombe (strain 972 / ATCC 24843) (Fission yeast).